We begin with the raw amino-acid sequence, 203 residues long: Small ribosomal subunit protein uS4 (203 aa).

The 64-residue stretch at 93 to 156 (RRLDNVVYRL…MKVPAILEAV (64 aa)) folds into the S4 RNA-binding domain.

Belongs to the universal ribosomal protein uS4 family. Part of the 30S ribosomal subunit. Contacts protein S5. The interaction surface between S4 and S5 is involved in control of translational fidelity.

In terms of biological role, one of the primary rRNA binding proteins, it binds directly to 16S rRNA where it nucleates assembly of the body of the 30S subunit. Functionally, with S5 and S12 plays an important role in translational accuracy. The polypeptide is Small ribosomal subunit protein uS4 (Streptococcus agalactiae serotype Ia (strain ATCC 27591 / A909 / CDC SS700)).